Here is a 1029-residue protein sequence, read N- to C-terminus: Ig-like and fibronectin type-III domain-containing protein 1 (1029 aa).

The first 22 residues, 1-22 (MCNVAEDPSSFSTITIATTCRA), serve as a signal peptide directing secretion. The Extracellular portion of the chain corresponds to 23–918 (EWPKVSPCIA…RRSASKGSSS (896 aa)). Residues Asn36, Asn93, Asn120, and Asn165 are each glycosylated (N-linked (GlcNAc...) asparagine). The 92-residue stretch at 90 to 181 (APGNVTISEL…TAKLFSTLPT (92 aa)) folds into the Fibronectin type-III 1 domain. The 43-residue stretch at 185–227 (PLCTIGEPIYMNDGRVMICDAVNPCPNGFRCTGAGSDLSYCCP) folds into the WR1 domain. N-linked (GlcNAc...) asparagine glycosylation is found at Asn257, Asn374, Asn409, Asn442, Asn482, Asn507, and Asn552. Fibronectin type-III domains lie at 330-417 (AVRN…TKPA) and 427-523 (APEK…AQKD). Residues 619–710 (ASVTMKKDKI…SRVEASSEVI (92 aa)) enclose the Ig-like C2-type domain. A disulfide bond links Cys640 and Cys693. N-linked (GlcNAc...) asparagine glycosylation is present at Asn753. One can recognise a Fibronectin type-III 4 domain in the interval 817–909 (APSEVSNVRI…SAIPKDSEPR (93 aa)). Residues 919-939 (AFWIVVILVVFGVLIAGLAVL) traverse the membrane as a helical segment. At 940–1029 (SKRRELPYPI…NGMRYAKLET (90 aa)) the chain is on the cytoplasmic side. A disordered region spans residues 988-1021 (SATTGTAAATQSEWQSANLEANSTTDNSHEYRNG). Polar residues predominate over residues 998–1013 (QSEWQSANLEANSTTD).

The protein localises to the cell membrane. The protein is Ig-like and fibronectin type-III domain-containing protein 1 of Caenorhabditis elegans.